Consider the following 1209-residue polypeptide: Pre-mRNA-splicing factor rse1 (1209 aa).

The protein belongs to the RSE1 family. Associated with the spliceosome.

Its subcellular location is the nucleus. In terms of biological role, involved in pre-mRNA splicing and cell cycle control. The chain is Pre-mRNA-splicing factor rse1 (msp-5) from Neurospora crassa (strain ATCC 24698 / 74-OR23-1A / CBS 708.71 / DSM 1257 / FGSC 987).